The following is a 254-amino-acid chain: Geranylgeranylglyceryl phosphate synthase (254 aa).

Residues Asp28 and Ser53 each contribute to the Mg(2+) site. Residues 172–178, 203–204, and 225–226 each bind sn-glycerol 1-phosphate; these read YLEAGSG, GG, and GT.

It belongs to the GGGP/HepGP synthase family. Group II subfamily. Mg(2+) is required as a cofactor.

The protein localises to the cytoplasm. The enzyme catalyses sn-glycerol 1-phosphate + (2E,6E,10E)-geranylgeranyl diphosphate = sn-3-O-(geranylgeranyl)glycerol 1-phosphate + diphosphate. The protein operates within membrane lipid metabolism; glycerophospholipid metabolism. Prenyltransferase that catalyzes the transfer of the geranylgeranyl moiety of geranylgeranyl diphosphate (GGPP) to the C3 hydroxyl of sn-glycerol-1-phosphate (G1P). This reaction is the first ether-bond-formation step in the biosynthesis of archaeal membrane lipids. In Methanococcus vannielii (strain ATCC 35089 / DSM 1224 / JCM 13029 / OCM 148 / SB), this protein is Geranylgeranylglyceryl phosphate synthase.